Reading from the N-terminus, the 1017-residue chain is NLR family CARD domain-containing protein 4 (1017 aa).

One can recognise a CARD domain in the interval Met-1–Ser-88. A nucleotide-binding domain (NBD) region spans residues Glu-95–Gly-298. Positions Ser-163–Lys-476 constitute an NACHT domain. Gly-169–Ser-176 serves as a coordination point for ATP. The winged-helix domain (WHD) stretch occupies residues Ser-356–Glu-463. Position 533 is a phosphoserine (Ser-533). 12 LRR repeats span residues Phe-578 to Phe-598, Lys-649 to Tyr-672, Val-728 to Asn-751, Leu-755 to Glu-778, Leu-780 to Val-805, Glu-817 to Leu-840, Ala-841 to Gln-863, Leu-871 to Gln-895, Lys-904 to Lys-926, Leu-929 to Asn-956, Lys-958 to Arg-978, and Glu-992 to Leu-1014.

In terms of assembly, homooligomer; homooligomerizes following activation of Naip proteins by pathogenic proteins such as S.typhimurium (Salmonella) flagellin or PrgJ. Component of the NLRC4 inflammasome, at least composed of NLRC4, caspase-1 (CASP1) and some NAIP family member. Interacts with EIF2AK2/PKR. Post-translationally, phosphorylated at Ser-533 following infection of macrophages with S.typhimurium (Salmonella). Phosphorylation is essential for NLRC4 inflammasome function to promote caspase-1 activation and pyroptosis. PRKCD phosphorylates Ser-533 in vitro.

The protein localises to the cytoplasm. Its subcellular location is the cytosol. Functionally, key component of inflammasomes that indirectly senses specific proteins from pathogenic bacteria and fungi and responds by assembling an inflammasome complex that promotes caspase-1 activation, cytokine production and macrophage pyroptosis. The NLRC4 inflammasome is activated as part of the innate immune response to a range of intracellular bacteria. The polypeptide is NLR family CARD domain-containing protein 4 (NLRC4) (Bos taurus (Bovine)).